Here is a 236-residue protein sequence, read N- to C-terminus: Syntaxin-8 (236 aa).

The Cytoplasmic portion of the chain corresponds to 1–215 (MAPDPWFSTY…LVDRKSTSCG (215 aa)). Residues 42–65 (VTIRALLQKLKEKIALLKDLLLRA) adopt a coiled-coil conformation. Residues 145 to 207 (QKIIQEQDAG…RTETRRVNLV (63 aa)) form the t-SNARE coiled-coil homology domain. Position 160 is a phosphoserine (Ser160). A helical; Anchor for type IV membrane protein transmembrane segment spans residues 216–232 (MIMVILLLLVAIVVVAV). Over 233–236 (WPTK) the chain is Vesicular.

Belongs to the syntaxin family. As to quaternary structure, forms a SNARE complex with STX7, VTI1B and VAMP8 which functions in the homotypic fusion of late endosomes. Part of the SNARE core complex containing STX7, VAMP8 and VTI1B. Interacts with VAMP8. Interacts with HECTD3. Interacts with TPC1. Post-translationally, ubiquitinated by HECTD3.

Its subcellular location is the membrane. Its function is as follows. Vesicle trafficking protein that functions in the early secretory pathway, possibly by mediating retrograde transport from cis-Golgi membranes to the ER. This Bos taurus (Bovine) protein is Syntaxin-8 (STX8).